A 150-amino-acid polypeptide reads, in one-letter code: Flagellar assembly factor FliW (150 aa).

This sequence belongs to the FliW family. Interacts with translational regulator CsrA. Interacts with flagellins FlaB1, FlaB2 and FlaB3.

It localises to the cytoplasm. In terms of biological role, acts as an anti-CsrA protein, binds CsrA and prevents it from repressing translation of its target genes, one of which is flagellin. Binds to flagellin and participates in the assembly of the flagellum. Functionally, binds to the C-terminal region of flagellin, which is implicated in polymerization, and participates in the assembly of the flagellum. This is Flagellar assembly factor FliW from Treponema pallidum (strain Nichols).